The primary structure comprises 146 residues: 3-hydroxyacyl-[acyl-carrier-protein] dehydratase FabZ (146 aa).

The active site involves H49.

The protein belongs to the thioester dehydratase family. FabZ subfamily.

The protein resides in the cytoplasm. It catalyses the reaction a (3R)-hydroxyacyl-[ACP] = a (2E)-enoyl-[ACP] + H2O. In terms of biological role, involved in unsaturated fatty acids biosynthesis. Catalyzes the dehydration of short chain beta-hydroxyacyl-ACPs and long chain saturated and unsaturated beta-hydroxyacyl-ACPs. This chain is 3-hydroxyacyl-[acyl-carrier-protein] dehydratase FabZ, found in Pseudomonas fluorescens (strain ATCC BAA-477 / NRRL B-23932 / Pf-5).